A 172-amino-acid polypeptide reads, in one-letter code: MASGFKKPSAASTGQKRKVAPKPELTEDQKQEVREAFDLFDVDGSGTIDAKELKVAMRALGFEPRKEEMKKMISEVDREGTGKISFNDFLAVMTQKMSEKDTKEEILKAFRLFDDDETGKISFKNLKRVANELGENLTDEELQEMIDEADRDGDGEVNEEEFLRIMKKTSLY.

Residues 1 to 31 are disordered; the sequence is MASGFKKPSAASTGQKRKVAPKPELTEDQKQ. EF-hand domains follow at residues 28 to 63, 64 to 99, 101 to 136, and 137 to 172; these read DQKQEVREAFDLFDVDGSGTIDAKELKVAMRALGFE, PRKEEMKKMISEVDREGTGKISFNDFLAVMTQKMSE, DTKEEILKAFRLFDDDETGKISFKNLKRVANELGEN, and LTDEELQEMIDEADRDGDGEVNEEEFLRIMKKTSLY. Ca(2+)-binding residues include D41, D43, S45, T47, and E52. 5 residues coordinate Ca(2+): D150, D152, D154, E156, and E161.

It belongs to the centrin family. In terms of assembly, monomer. Interacts with CIMAP3. Interacts with USP49.

The protein localises to the cytoplasm. It is found in the cytoskeleton. It localises to the microtubule organizing center. The protein resides in the centrosome. Its subcellular location is the cell projection. The protein localises to the cilium. Its function is as follows. Plays a fundamental role in microtubule-organizing center structure and function. Plays a role in sperm cilia formation. The chain is Centrin-1 from Homo sapiens (Human).